Here is a 130-residue protein sequence, read N- to C-terminus: Probable 15 kDa heat shock protein (130 aa).

Residues 21–130 form the sHSP domain; that stretch reads ERVRILAPRV…LTKKIEVRSE (110 aa).

It belongs to the small heat shock protein (HSP20) family.

This chain is Probable 15 kDa heat shock protein (hsp15), found in Leptospira interrogans serogroup Icterohaemorrhagiae serovar Lai (strain 56601).